We begin with the raw amino-acid sequence, 485 residues long: Glutamyl-tRNA(Gln) amidotransferase subunit A (485 aa).

Active-site charge relay system residues include lysine 79 and serine 154. Serine 178 serves as the catalytic Acyl-ester intermediate.

It belongs to the amidase family. GatA subfamily. Heterotrimer of A, B and C subunits.

The catalysed reaction is L-glutamyl-tRNA(Gln) + L-glutamine + ATP + H2O = L-glutaminyl-tRNA(Gln) + L-glutamate + ADP + phosphate + H(+). Functionally, allows the formation of correctly charged Gln-tRNA(Gln) through the transamidation of misacylated Glu-tRNA(Gln) in organisms which lack glutaminyl-tRNA synthetase. The reaction takes place in the presence of glutamine and ATP through an activated gamma-phospho-Glu-tRNA(Gln). This chain is Glutamyl-tRNA(Gln) amidotransferase subunit A, found in Staphylococcus epidermidis (strain ATCC 35984 / DSM 28319 / BCRC 17069 / CCUG 31568 / BM 3577 / RP62A).